A 558-amino-acid chain; its full sequence is GPI mannosyltransferase 3 (558 aa).

The next 4 helical transmembrane spans lie at 53 to 73, 81 to 101, 164 to 184, and 190 to 210; these read GLRS…LKLL, VWFA…VSVF, AYCG…LLTL, and VPFL…AVVL. N-linked (GlcNAc...) asparagine glycosylation is present at N220. The helical transmembrane segment at 234–254 threads the bilayer; the sequence is IVLTGLIVLVAVLGGVMVLDY. Residue N275 is glycosylated (N-linked (GlcNAc...) asparagine). Helical transmembrane passes span 292–312, 323–343, 348–368, and 372–392; these read VLVG…LVLW, PVLG…LIDH, FVFV…VRWS, and AVVV…IYLM.

It belongs to the glycosyltransferase 22 family. PIGB subfamily.

The protein resides in the endoplasmic reticulum membrane. It functions in the pathway glycolipid biosynthesis; glycosylphosphatidylinositol-anchor biosynthesis. Functionally, mannosyltransferase involved in glycosylphosphatidylinositol-anchor biosynthesis. Transfers the third alpha-1,2-mannose to Man2-GlcN-acyl-PI during GPI precursor assembly. This is GPI mannosyltransferase 3 (GPI10) from Trypanosoma brucei brucei.